The chain runs to 344 residues: MGALRVLRYVSMIWRPELGSCARQRDAGFGTEARRPSQPHRSSKHKDLVEDQPFPGLLRTENLGLEELAHVLRAAVVDQKGPLVTLNKPQGLPVTGRPGELTLLSVLPQLSQALGLEHQELQVVRAPGKEASGLVLLSSCPQTASRLQKFFIHSRRAQRPTATYCAVTDGIPEPSEGTVCMPLKMEQMNDVDLAVPVMSPSRKDIQEGVKRTLSRFHVMATGRGCALVQLQPLTVFPNQLQVHMALQLCPILGDHTYAARVGTVLGQRFLWPAETTKPQRQVLDEALLRHLRLSPSQVAQMPLHLHLHRLLLPGTGSRDPPSELLAPLPPYFSRTLQCLRLSQQ.

The N-terminal 36 residues, 1–36 (MGALRVLRYVSMIWRPELGSCARQRDAGFGTEARRP), are a transit peptide targeting the mitochondrion. The tract at residues 25-53 (RDAGFGTEARRPSQPHRSSKHKDLVEDQP) is disordered.

It belongs to the pseudouridine synthase RluA family. As to quaternary structure, forms a regulatory protein-RNA complex, consisting of RCC1L, NGRN, RPUSD3, RPUSD4, TRUB2, FASTKD2 and 16S mt-rRNA.

The protein resides in the mitochondrion matrix. The enzyme catalyses a uridine in mRNA = a pseudouridine in mRNA. In terms of biological role, catalyzes uridine to pseudouridine isomerization (pseudouridylation) of specific mitochondrial mRNAs (mt-mRNAs), a post-transcriptional modification necessary for their translation. Acts at position 390 in COXI mt-mRNA and at position 697-699 in mitochondrial COXIII mt-mRNA. As a component of a functional protein-RNA module, consisting of RCC1L, NGRN, RPUSD3, RPUSD4, TRUB2, FASTKD2 and 16S mitochondrial ribosomal RNA (16S mt-rRNA), controls 16S mt-rRNA abundance and may play a role in mitochondrial ribosome biogenesis. This chain is Mitochondrial mRNA pseudouridine synthase Rpusd3 (Rpusd3), found in Mus musculus (Mouse).